Reading from the N-terminus, the 406-residue chain is Endoplasmic reticulum resident protein 44 (406 aa).

The signal sequence occupies residues 1-29 (MIPGIFLSLPDLRCSLLLLVTWVFTPVTA). One can recognise a Thioredoxin domain in the interval 30–138 (EIISLDTENI…VKALADYIRQ (109 aa)). Disulfide bonds link C189/C241 and C301/C318. The segment at 236 to 285 (WIQDKCVPLVREITFENGEELTEEGLPFLILFHMKEDTESLEIFQNEVAR) is interaction with ITPR1. The interval 360-387 (FHHGPDPTDTAPGEEVQDVASSPPESSF) is disordered. Residues 378 to 387 (VASSPPESSF) are compositionally biased toward polar residues. The short motif at 403–406 (RDEL) is the Prevents secretion from ER element.

In terms of assembly, forms mixed disulfides with both ERO1A and ERO1B and cargo folding intermediates; the interactions with ERO1A and ERO1B result in their retention in the endoplasmic reticulum. Directly interacts with ITPR1 in a pH-, redox state- and calcium-dependent manner, but not with ITPR2 or ITPR3. The strength of this interaction inversely correlates with calcium concentration.

Its subcellular location is the endoplasmic reticulum lumen. Its function is as follows. Mediates thiol-dependent retention in the early secretory pathway, forming mixed disulfides with substrate proteins through its conserved CRFS motif. Inhibits the calcium channel activity of ITPR1. May have a role in the control of oxidative protein folding in the endoplasmic reticulum. Required to retain ERO1A and ERO1B in the endoplasmic reticulum. This is Endoplasmic reticulum resident protein 44 (ERP44) from Bos taurus (Bovine).